We begin with the raw amino-acid sequence, 73 residues long: Small ribosomal subunit protein bS18 (73 aa).

This sequence belongs to the bacterial ribosomal protein bS18 family. As to quaternary structure, part of the 30S ribosomal subunit. Forms a tight heterodimer with protein bS6.

Its function is as follows. Binds as a heterodimer with protein bS6 to the central domain of the 16S rRNA, where it helps stabilize the platform of the 30S subunit. The sequence is that of Small ribosomal subunit protein bS18 from Synechococcus sp. (strain RCC307).